The primary structure comprises 173 residues: MTNDSEIVVEEKISGPISDWLSNNGFENIPLKEDHLGIEVIKISPNNLLTIVEALKNDGFNYLQCQGGYDEGPGLNIVCFYNLIEMNELKEDISPREVRLKVFLDRNGDLTVPSLYSLFRGADWQERETFDMYGVNFQGHPHPKRLLMPEDWKGWPLRKDYVQPDFYEMQDAY.

It belongs to the complex I 30 kDa subunit family. As to quaternary structure, NDH-1 can be composed of about 15 different subunits; different subcomplexes with different compositions have been identified which probably have different functions.

It is found in the cellular thylakoid membrane. It carries out the reaction a plastoquinone + NADH + (n+1) H(+)(in) = a plastoquinol + NAD(+) + n H(+)(out). The enzyme catalyses a plastoquinone + NADPH + (n+1) H(+)(in) = a plastoquinol + NADP(+) + n H(+)(out). In terms of biological role, NDH-1 shuttles electrons from an unknown electron donor, via FMN and iron-sulfur (Fe-S) centers, to quinones in the respiratory and/or the photosynthetic chain. The immediate electron acceptor for the enzyme in this species is believed to be plastoquinone. Couples the redox reaction to proton translocation, and thus conserves the redox energy in a proton gradient. Cyanobacterial NDH-1 also plays a role in inorganic carbon-concentration. The chain is NAD(P)H-quinone oxidoreductase subunit J from Prochlorococcus marinus (strain NATL2A).